Here is a 62-residue protein sequence, read N- to C-terminus: Large ribosomal subunit protein uL29 (62 aa).

It belongs to the universal ribosomal protein uL29 family.

The sequence is that of Large ribosomal subunit protein uL29 from Geotalea daltonii (strain DSM 22248 / JCM 15807 / FRC-32) (Geobacter daltonii).